Reading from the N-terminus, the 159-residue chain is Ribose-5-phosphate isomerase B (159 aa).

Residues 8–9 and 67–71 contribute to the D-ribulose 5-phosphate site; these read DH and GSGNG. Glutamate 72 functions as the Proton acceptor in the catalytic mechanism. Histidine 99 serves as the catalytic Proton donor. 4 residues coordinate D-ribulose 5-phosphate: asparagine 100, arginine 110, arginine 134, and arginine 138.

Belongs to the LacAB/RpiB family. Homodimer.

It carries out the reaction aldehydo-D-ribose 5-phosphate = D-ribulose 5-phosphate. The protein operates within carbohydrate degradation; pentose phosphate pathway; D-ribose 5-phosphate from D-ribulose 5-phosphate (non-oxidative stage): step 1/1. Functionally, catalyzes the interconversion of ribulose-5-P and ribose-5-P. The protein is Ribose-5-phosphate isomerase B of Mycolicibacterium paratuberculosis (strain ATCC BAA-968 / K-10) (Mycobacterium paratuberculosis).